Consider the following 160-residue polypeptide: Cathelin-related peptide SC5 (160 aa).

Positions 1 to 29 (METQRASLSLGRCSLWLLLLGLALPSASA) are cleaved as a signal peptide. Positions 30–131 (QVLSYREAVL…DITCAEPQSV (102 aa)) are excised as a propeptide. Cystine bridges form between cysteine 86–cysteine 97 and cysteine 108–cysteine 125.

The protein belongs to the cathelicidin family.

It localises to the secreted. Its function is as follows. Broad spectrum bactericidal agent. This is Cathelin-related peptide SC5 from Ovis aries (Sheep).